A 217-amino-acid chain; its full sequence is Ribosomal RNA large subunit methyltransferase E (217 aa).

Positions 71, 73, 91, 107, and 132 each coordinate S-adenosyl-L-methionine. Lys172 (proton acceptor) is an active-site residue.

The protein belongs to the class I-like SAM-binding methyltransferase superfamily. RNA methyltransferase RlmE family.

It is found in the cytoplasm. The enzyme catalyses uridine(2552) in 23S rRNA + S-adenosyl-L-methionine = 2'-O-methyluridine(2552) in 23S rRNA + S-adenosyl-L-homocysteine + H(+). Functionally, specifically methylates the uridine in position 2552 of 23S rRNA at the 2'-O position of the ribose in the fully assembled 50S ribosomal subunit. The protein is Ribosomal RNA large subunit methyltransferase E of Psychromonas ingrahamii (strain DSM 17664 / CCUG 51855 / 37).